A 164-amino-acid polypeptide reads, in one-letter code: Zinc finger A20 and AN1 domain-containing stress-associated protein 1 (164 aa).

The A20-type zinc finger occupies 16 to 50 (APEITLCANSCGFPGNPATQNLCQNCFLAATASTS). Zn(2+) contacts are provided by Cys-22, Cys-26, Cys-38, and Cys-41. A compositionally biased stretch (low complexity) spans 48–58 (STSSPSSLSSP). The segment at 48–81 (STSSPSSLSSPVLDKQPPRPAAPLVEPQAPLPPP) is disordered. Residues 99–145 (TSAVNRCSRCRKRVGLTGFRCRCGHLFCGEHRYSDRHGCSYDYKSAA) form an AN1-type zinc finger. Zn(2+) is bound by residues Cys-105, Cys-108, Cys-119, Cys-121, Cys-126, His-129, His-135, and Cys-137.

In terms of biological role, may be involved in environmental stress response. This is Zinc finger A20 and AN1 domain-containing stress-associated protein 1 (SAP1) from Oryza sativa subsp. indica (Rice).